Consider the following 494-residue polypeptide: Guanosine-5'-triphosphate,3'-diphosphate pyrophosphatase (494 aa).

The protein belongs to the GppA/Ppx family. GppA subfamily.

The enzyme catalyses guanosine 3'-diphosphate 5'-triphosphate + H2O = guanosine 3',5'-bis(diphosphate) + phosphate + H(+). It functions in the pathway purine metabolism; ppGpp biosynthesis; ppGpp from GTP: step 2/2. Functionally, catalyzes the conversion of pppGpp to ppGpp. Guanosine pentaphosphate (pppGpp) is a cytoplasmic signaling molecule which together with ppGpp controls the 'stringent response', an adaptive process that allows bacteria to respond to amino acid starvation, resulting in the coordinated regulation of numerous cellular activities. The protein is Guanosine-5'-triphosphate,3'-diphosphate pyrophosphatase of Erwinia tasmaniensis (strain DSM 17950 / CFBP 7177 / CIP 109463 / NCPPB 4357 / Et1/99).